The following is a 57-amino-acid chain: Somatostatin-2 (57 aa).

The tract at residues 1–26 is disordered; sequence GRSHMVLNSALEGARGGPGGEEIPER.

Belongs to the somatostatin family.

It is found in the secreted. In terms of biological role, somatostatin inhibits the release of somatotropin. The protein is Somatostatin-2 (sst2) of Piaractus mesopotamicus (Small-scaled pacu).